The sequence spans 1218 residues: DNA polymerase subunit gamma-1 (1218 aa).

The tract at residues L31–G50 is disordered. The Exo I signature appears at V179–E183. Catalysis depends on D181, which acts as the Exonuclease activity. Positions V250–R258 match the Exo II motif. S289 contacts DNA. The short motif at Y378 to T386 is the Exo III element. The interval K484–S524 is disordered. Residues A492 to G553 are accessory-interacting determinant. Positions M507–E520 are enriched in acidic residues. Residue R561 participates in RNA binding. Residue S575 participates in DNA binding. RNA contacts are provided by H733, G742, and K747. Positions 785 and 828 each coordinate DNA. Residues T837 to N843 are trigger loop. Positions 842 and 848 each coordinate RNA. Residues V866–L875 carry the Pol A motif. Residues D869, V870, S872, E874, R922, K926, and Y930 each contribute to the a 2'-deoxyribonucleoside 5'-triphosphate site. Mg(2+) is bound by residues D869 and V870. The short motif at R922 to G937 is the Pol B element. DNA is bound by residues T1073 and S1074. The Pol C signature appears at H1113–V1120. D1114 serves as a coordination point for a 2'-deoxyribonucleoside 5'-triphosphate. Position 1114 (D1114) interacts with Mg(2+).

The protein belongs to the DNA polymerase type-A family. Heterotrimer composed of a catalytic subunit and a homodimer of accessory subunits (POLG:POLG2). Interacts with TTC3. Interacts with LIG3. Requires Mg(2+) as cofactor.

It localises to the mitochondrion. The protein resides in the mitochondrion matrix. Its subcellular location is the mitochondrion nucleoid. It catalyses the reaction DNA(n) + a 2'-deoxyribonucleoside 5'-triphosphate = DNA(n+1) + diphosphate. The catalysed reaction is a 3'-end 2'-deoxyribonucleotidyl-deoxyribonucleotide-DNA + H2O = a 3'-end 2'-deoxyribonucleotide-DNA + a 2'-deoxyribonucleoside 5'-phosphate + H(+). The enzyme catalyses a 5'-end 2'-deoxyribose-2'-deoxyribonucleotide-DNA = (2E,4S)-4-hydroxypenten-2-al-5-phosphate + a 5'-end 5'-phospho-2'-deoxyribonucleoside-DNA + H(+). Its activity is regulated as follows. Inhibited by dideoxynucleotides such as antiviral agent zalcitabine. In terms of biological role, catalytic subunit of DNA polymerase gamma solely responsible for replication of mitochondrial DNA (mtDNA). Replicates both heavy and light strands of the circular mtDNA genome using a single-stranded DNA template, RNA primers and the four deoxyribonucleoside triphosphates as substrates. Has 5' -&gt; 3' polymerase activity. Functionally interacts with TWNK and SSBP1 at the replication fork to form a highly processive replisome, where TWNK unwinds the double-stranded DNA template prior to replication and SSBP1 covers the parental heavy strand to enable continuous replication of the entire mitochondrial genome. A single nucleotide incorporation cycle includes binding of the incoming nucleotide at the insertion site, a phosphodiester bond formation reaction that extends the 3'-end of the primer DNA, and translocation of the primer terminus to the post-insertion site. After completing replication of a mtDNA strand, mediates 3' -&gt; 5' exonucleolytic degradation at the nick to enable proper ligation. Highly accurate due to high nucleotide selectivity and 3' -&gt; 5' exonucleolytic proofreading. Proficiently corrects base substitutions, single-base additions and deletions in non-repetitive sequences and short repeats, but displays lower proofreading activity when replicating longer homopolymeric stretches. Exerts exonuclease activity toward single-stranded DNA and double-stranded DNA containing 3'-terminal mispairs. When a misincorporation occurs, transitions from replication to a pro-nucleolytic editing mode and removes the missincorporated nucleoside in the exonuclease active site. Proceeds via an SN2 nucleolytic mechanism in which Asp-198 catalyzes phosphodiester bond hydrolysis and Glu-200 stabilizes the leaving group. As a result the primer strand becomes one nucleotide shorter and is positioned in the post-insertion site, ready to resume DNA synthesis. Exerts 5'-deoxyribose phosphate (dRP) lyase activity and mediates repair-associated mtDNA synthesis (gap filling) in base-excision repair pathway. Catalyzes the release of the 5'-terminal 2-deoxyribose-5-phosphate sugar moiety from incised apurinic/apyrimidinic (AP) sites to produce a substrate for DNA ligase. The dRP lyase reaction does not require divalent metal ions and likely proceeds via a Schiff base intermediate in a beta-elimination reaction mechanism. In Mus musculus (Mouse), this protein is DNA polymerase subunit gamma-1.